Here is a 453-residue protein sequence, read N- to C-terminus: MDTDLISNLPDDVLGKILSLVPTKLAAATSVLSKRWRNLLPLVDSLDFDETMLFYPDNKDGEDEASSYESGQRRRHSFSHFVDKTLALLSNAPLTEKFSLKCYHEDDGARINRWIRTALERGCLELNLEAANYLPIDSQYFTSNTLVKLTISDGFYPGGHLLPFGGVFFPALKTLTLVSVCFTSVEMINFFIHGCPALEELFLCVWMQYMSSPNVKRVTITSDFDDDIQRPSMVLKTPSLVYLDYSSYVAGNYYVVLDSLVEARLDLRLYEPIIYDEDGLWNAEVFGNITNLIEAIRTIKILHLSPSSLEVFYYCCDLPVLEDLVNLSIESDKEKGWEVMPRLLNKSPNLQTLVVKGLVHRVTYCCGDACACIRMKDREIVSCLSRCRVKVLKILGYGGSFRELKQMRHFLGKLKCLETVKVGVKEGSKKSNYLVANVMALPRVSSKCKIQFI.

The F-box domain occupies 3 to 51 (TDLISNLPDDVLGKILSLVPTKLAAATSVLSKRWRNLLPLVDSLDFDET).

In terms of assembly, part of a SCF (ASK-cullin-F-box) protein ligase complex.

It participates in protein modification; protein ubiquitination. In terms of biological role, component of SCF(ASK-cullin-F-box) E3 ubiquitin ligase complexes, which may mediate the ubiquitination and subsequent proteasomal degradation of target proteins. This is F-box protein At4g27050 from Arabidopsis thaliana (Mouse-ear cress).